Consider the following 348-residue polypeptide: D-alanine--D-alanine ligase (348 aa).

The ATP-grasp domain occupies 132 to 334 (KRVLESADIP…YAELIEELVR (203 aa)). Position 162–217 (162–217 (EAVLSYPVFVKPANMGSSVGISKAESEEELRAAILLALTYDSRILIEQGVLAREIE)) interacts with ATP. Mg(2+)-binding residues include Asp-288, Glu-301, and Asn-303.

This sequence belongs to the D-alanine--D-alanine ligase family. Requires Mg(2+) as cofactor. The cofactor is Mn(2+).

It is found in the cytoplasm. It carries out the reaction 2 D-alanine + ATP = D-alanyl-D-alanine + ADP + phosphate + H(+). It participates in cell wall biogenesis; peptidoglycan biosynthesis. Functionally, cell wall formation. This Streptococcus equi subsp. zooepidemicus (strain MGCS10565) protein is D-alanine--D-alanine ligase.